Here is a 189-residue protein sequence, read N- to C-terminus: Interferon alpha-1/13 (189 aa).

Positions 1–23 are cleaved as a signal peptide; that stretch reads MASPFALLMVLVVLSCKSSCSLG. 2 cysteine pairs are disulfide-bonded: Cys-24–Cys-122 and Cys-52–Cys-162.

Belongs to the alpha/beta interferon family. Interacts with CR2.

The protein resides in the secreted. Functionally, produced by macrophages, IFN-alpha have antiviral activities. Interferon stimulates the production of two enzymes: a protein kinase and an oligoadenylate synthetase. The protein is Interferon alpha-1/13 (IFNA1) of Homo sapiens (Human).